Consider the following 93-residue polypeptide: Pyrimidine/purine nucleoside phosphorylase (93 aa).

This sequence belongs to the nucleoside phosphorylase PpnP family.

The enzyme catalyses a purine D-ribonucleoside + phosphate = a purine nucleobase + alpha-D-ribose 1-phosphate. It catalyses the reaction adenosine + phosphate = alpha-D-ribose 1-phosphate + adenine. The catalysed reaction is cytidine + phosphate = cytosine + alpha-D-ribose 1-phosphate. It carries out the reaction guanosine + phosphate = alpha-D-ribose 1-phosphate + guanine. The enzyme catalyses inosine + phosphate = alpha-D-ribose 1-phosphate + hypoxanthine. It catalyses the reaction thymidine + phosphate = 2-deoxy-alpha-D-ribose 1-phosphate + thymine. The catalysed reaction is uridine + phosphate = alpha-D-ribose 1-phosphate + uracil. It carries out the reaction xanthosine + phosphate = alpha-D-ribose 1-phosphate + xanthine. In terms of biological role, catalyzes the phosphorolysis of diverse nucleosides, yielding D-ribose 1-phosphate and the respective free bases. Can use uridine, adenosine, guanosine, cytidine, thymidine, inosine and xanthosine as substrates. Also catalyzes the reverse reactions. This is Pyrimidine/purine nucleoside phosphorylase from Sorangium cellulosum (strain So ce56) (Polyangium cellulosum (strain So ce56)).